The sequence spans 402 residues: S-adenosylmethionine synthase (402 aa).

An ATP-binding site is contributed by His-16. Position 18 (Asp-18) interacts with Mg(2+). Glu-44 is a K(+) binding site. 2 residues coordinate L-methionine: Glu-57 and Gln-103. The tract at residues 103-113 is flexible loop; that stretch reads QSPDIAQGVDT. ATP is bound by residues 178-180, 249-250, Asp-258, 264-265, Ala-281, and Lys-285; these read DGK, KF, and RK. Residue Asp-258 coordinates L-methionine. Lys-289 is an L-methionine binding site.

It belongs to the AdoMet synthase family. As to quaternary structure, homotetramer; dimer of dimers. Requires Mg(2+) as cofactor. The cofactor is K(+).

The protein localises to the cytoplasm. The catalysed reaction is L-methionine + ATP + H2O = S-adenosyl-L-methionine + phosphate + diphosphate. It participates in amino-acid biosynthesis; S-adenosyl-L-methionine biosynthesis; S-adenosyl-L-methionine from L-methionine: step 1/1. Catalyzes the formation of S-adenosylmethionine (AdoMet) from methionine and ATP. The overall synthetic reaction is composed of two sequential steps, AdoMet formation and the subsequent tripolyphosphate hydrolysis which occurs prior to release of AdoMet from the enzyme. In Mycobacterium sp. (strain JLS), this protein is S-adenosylmethionine synthase.